Reading from the N-terminus, the 287-residue chain is Co-chaperone protein DjlA (287 aa).

The Periplasmic segment spans residues 1–6 (MQIFGK). The chain crosses the membrane as a helical span at residues 7 to 30 (ILGAFFGFLFGGVFGALFGLFIGH). Residues 31–287 (QFDKARRLSQ…DLIKKEKGFK (257 aa)) lie on the Cytoplasmic side of the membrane. The tract at residues 192–213 (GGFGGQQHQSHHSSSHGGWQQA) is disordered. The region spanning 221–287 (DAYKILGIDA…DLIKKEKGFK (67 aa)) is the J domain.

Homodimer.

It localises to the cell inner membrane. Regulatory DnaK co-chaperone. Direct interaction between DnaK and DjlA is needed for the induction of the wcaABCDE operon, involved in the synthesis of a colanic acid polysaccharide capsule, possibly through activation of the RcsB/RcsC phosphotransfer signaling pathway. The colanic acid capsule may help the bacterium survive conditions outside the host. The polypeptide is Co-chaperone protein DjlA (Vibrio vulnificus (strain CMCP6)).